Consider the following 49-residue polypeptide: Light-harvesting protein B800/850/890 alpha-3 chain (49 aa).

Topologically, residues 1–14 (MNQARIWLVVKPSV) are cytoplasmic. A helical membrane pass occupies residues 15-35 (GLPLLLGVVLLIALLVHGAIL). Histidine 31 lines the a bacteriochlorophyll pocket. At 36 to 49 (TNTSWYPTYFEGNW) the chain is on the periplasmic side.

Belongs to the antenna complex alpha subunit family. The core complex is formed by different alpha and beta chains, binding bacteriochlorophyll molecules, and arranged most probably in tetrameric structures disposed around the reaction center. The non-pigmented gamma chains may constitute additional components.

Its subcellular location is the cell inner membrane. Its function is as follows. Antenna complexes are light-harvesting systems, which transfer the excitation energy to the reaction centers. This Halorhodospira halophila (strain DSM 244 / SL1) (Ectothiorhodospira halophila (strain DSM 244 / SL1)) protein is Light-harvesting protein B800/850/890 alpha-3 chain.